The sequence spans 172 residues: Small ribosomal subunit protein uS13c (172 aa).

The N-terminal 47 residues, 1–47, are a transit peptide targeting the chloroplast; the sequence is MAHTLATPVAPSVSLICNTKLSVSLSSSSLAFRPVNPKNGGGLSIKC.

As to quaternary structure, component of the chloroplast small ribosomal subunit (SSU). Mature 70S chloroplast ribosomes of higher plants consist of a small (30S) and a large (50S) subunit. The 30S small subunit contains 1 molecule of ribosomal RNA (16S rRNA) and 24 different proteins. The 50S large subunit contains 3 rRNA molecules (23S, 5S and 4.5S rRNA) and 33 different proteins. uS13c interacts with translation factor pY (PSRP1).

It localises to the plastid. The protein resides in the chloroplast. Component of the chloroplast ribosome (chloro-ribosome), a dedicated translation machinery responsible for the synthesis of chloroplast genome-encoded proteins, including proteins of the transcription and translation machinery and components of the photosynthetic apparatus. The chain is Small ribosomal subunit protein uS13c (RPS13) from Spinacia oleracea (Spinach).